The primary structure comprises 484 residues: Glutamate--tRNA ligase (484 aa).

The 'HIGH' region signature appears at 11 to 21 (PSPTGLLHIGN). The short motif at 255–259 (KLSKR) is the 'KMSKS' region element. Position 258 (Lys-258) interacts with ATP.

Belongs to the class-I aminoacyl-tRNA synthetase family. Glutamate--tRNA ligase type 1 subfamily. Monomer.

The protein localises to the cytoplasm. The catalysed reaction is tRNA(Glu) + L-glutamate + ATP = L-glutamyl-tRNA(Glu) + AMP + diphosphate. Catalyzes the attachment of glutamate to tRNA(Glu) in a two-step reaction: glutamate is first activated by ATP to form Glu-AMP and then transferred to the acceptor end of tRNA(Glu). This Streptococcus agalactiae serotype V (strain ATCC BAA-611 / 2603 V/R) protein is Glutamate--tRNA ligase.